A 78-amino-acid polypeptide reads, in one-letter code: Small ribosomal subunit protein bS16 (78 aa).

It belongs to the bacterial ribosomal protein bS16 family.

The polypeptide is Small ribosomal subunit protein bS16 (Thermodesulfovibrio yellowstonii (strain ATCC 51303 / DSM 11347 / YP87)).